The sequence spans 119 residues: Large ribosomal subunit protein bL20 (119 aa).

This sequence belongs to the bacterial ribosomal protein bL20 family.

Its function is as follows. Binds directly to 23S ribosomal RNA and is necessary for the in vitro assembly process of the 50S ribosomal subunit. It is not involved in the protein synthesizing functions of that subunit. The sequence is that of Large ribosomal subunit protein bL20 from Dichelobacter nodosus (strain VCS1703A).